The sequence spans 612 residues: Sulfite reductase [NADPH] hemoprotein beta-component (612 aa).

The disordered stretch occupies residues 1-26; the sequence is MDDHKPIETPDGPAVDTPGIGARRYE. Residues Cys469, Cys475, Cys514, and Cys518 each contribute to the [4Fe-4S] cluster site. Residue Cys518 participates in siroheme binding.

It belongs to the nitrite and sulfite reductase 4Fe-4S domain family. As to quaternary structure, alpha(8)-beta(8). The alpha component is a flavoprotein, the beta component is a hemoprotein. The cofactor is siroheme. [4Fe-4S] cluster is required as a cofactor.

The catalysed reaction is hydrogen sulfide + 3 NADP(+) + 3 H2O = sulfite + 3 NADPH + 4 H(+). It functions in the pathway sulfur metabolism; hydrogen sulfide biosynthesis; hydrogen sulfide from sulfite (NADPH route): step 1/1. Its function is as follows. Component of the sulfite reductase complex that catalyzes the 6-electron reduction of sulfite to sulfide. This is one of several activities required for the biosynthesis of L-cysteine from sulfate. In Methylorubrum extorquens (strain PA1) (Methylobacterium extorquens), this protein is Sulfite reductase [NADPH] hemoprotein beta-component.